Reading from the N-terminus, the 149-residue chain is UPF0260 protein PFLU_1520 (149 aa).

It belongs to the UPF0260 family.

This chain is UPF0260 protein PFLU_1520, found in Pseudomonas fluorescens (strain SBW25).